The chain runs to 252 residues: dITP/XTP pyrophosphatase (252 aa).

7–12 provides a ligand contact to substrate; the sequence is THNEGK. The active-site Proton acceptor is the aspartate 74. A Mg(2+)-binding site is contributed by aspartate 74. Substrate contacts are provided by residues serine 75 and 193–196; that span reads FGYD. The segment at 202–229 is disordered; the sequence is DDQPAGRVSTEPDHEGEPLTSAEMTPAE. Substrate is bound by residues lysine 230 and 235–236; that span reads HR.

Belongs to the HAM1 NTPase family. Homodimer. Mg(2+) serves as cofactor.

The catalysed reaction is XTP + H2O = XMP + diphosphate + H(+). The enzyme catalyses dITP + H2O = dIMP + diphosphate + H(+). It carries out the reaction ITP + H2O = IMP + diphosphate + H(+). Pyrophosphatase that catalyzes the hydrolysis of nucleoside triphosphates to their monophosphate derivatives, with a high preference for the non-canonical purine nucleotides XTP (xanthosine triphosphate), dITP (deoxyinosine triphosphate) and ITP. Seems to function as a house-cleaning enzyme that removes non-canonical purine nucleotides from the nucleotide pool, thus preventing their incorporation into DNA/RNA and avoiding chromosomal lesions. The sequence is that of dITP/XTP pyrophosphatase from Bifidobacterium longum (strain DJO10A).